The primary structure comprises 539 residues: Phosphoenolpyruvate carboxykinase (ATP) (539 aa).

Substrate is bound by residues arginine 59, tyrosine 200, and lysine 206. Residues lysine 206, histidine 225, and 242-250 (GLSGTGKTT) contribute to the ATP site. The Mn(2+) site is built by lysine 206 and histidine 225. Aspartate 263 serves as a coordination point for Mn(2+). ATP-binding positions include glutamate 291, arginine 327, 447-448 (RI), and threonine 453. Arginine 327 contacts substrate.

It belongs to the phosphoenolpyruvate carboxykinase (ATP) family. Requires Mn(2+) as cofactor.

The protein localises to the cytoplasm. The enzyme catalyses oxaloacetate + ATP = phosphoenolpyruvate + ADP + CO2. It participates in carbohydrate biosynthesis; gluconeogenesis. Functionally, involved in the gluconeogenesis. Catalyzes the conversion of oxaloacetate (OAA) to phosphoenolpyruvate (PEP) through direct phosphoryl transfer between the nucleoside triphosphate and OAA. This Selenomonas ruminantium protein is Phosphoenolpyruvate carboxykinase (ATP).